Reading from the N-terminus, the 730-residue chain is LisH domain-containing protein ARMC9 (730 aa).

The LisH domain maps to 7-39; that stretch reads HESELLGLVKEYLDFAEFEDTLKTFSKECKVKG. Residues 205 to 242 are a coiled coil; the sequence is SNNKEMLQQLHQQLLEAERRAMAYLKRYNKMQADYHSL. Ser583 carries the post-translational modification Phosphoserine. Residues 675–730 form a disordered region; sequence QNAQQARNGCPRPIPVAQPDDYKEGKRGVAGRATPSSCKSAECAEPVLSSGAQKPK.

Interacts with TOGARAM1, CCDC66, CEP104, CSPP1 and CEP290. Interacts with NDUFAF2.

It is found in the cytoplasm. Its subcellular location is the cytoskeleton. The protein resides in the cilium basal body. The protein localises to the cell projection. It localises to the cilium. It is found in the microtubule organizing center. Its subcellular location is the centrosome. The protein resides in the centriole. In terms of biological role, involved in ciliogenesis. It is required for appropriate acetylation and polyglutamylation of ciliary microtubules, and regulation of cilium length. Acts as a positive regulator of hedgehog (Hh)signaling. May participate in the trafficking and/or retention of GLI2 and GLI3 proteins at the ciliary tip. This is LisH domain-containing protein ARMC9 (Armc9) from Rattus norvegicus (Rat).